A 492-amino-acid chain; its full sequence is Proline--tRNA ligase (492 aa).

It belongs to the class-II aminoacyl-tRNA synthetase family. ProS type 3 subfamily. Homodimer.

Its subcellular location is the cytoplasm. It carries out the reaction tRNA(Pro) + L-proline + ATP = L-prolyl-tRNA(Pro) + AMP + diphosphate. Catalyzes the attachment of proline to tRNA(Pro) in a two-step reaction: proline is first activated by ATP to form Pro-AMP and then transferred to the acceptor end of tRNA(Pro). In Flavobacterium psychrophilum (strain ATCC 49511 / DSM 21280 / CIP 103535 / JIP02/86), this protein is Proline--tRNA ligase.